A 342-amino-acid polypeptide reads, in one-letter code: Serpentine receptor class r-10 (342 aa).

Topologically, residues Met1–Asp11 are extracellular. Residues Thr12–Leu32 form a helical membrane-spanning segment. Residues Lys33–Asn38 lie on the Cytoplasmic side of the membrane. A helical transmembrane segment spans residues Leu39–Ile59. The Extracellular segment spans residues Glu60 to Asn92. 2 N-linked (GlcNAc...) asparagine glycosylation sites follow: Asn71 and Asn83. A helical transmembrane segment spans residues Ser93–Tyr113. Over Arg114–Tyr131 the chain is Cytoplasmic. A helical membrane pass occupies residues Leu132 to Phe152. Residues Leu153 to Asn202 lie on the Extracellular side of the membrane. Residue Asn179 is glycosylated (N-linked (GlcNAc...) asparagine). A helical transmembrane segment spans residues Leu203–Cys223. Over Gly224–Leu257 the chain is Cytoplasmic. Residues Ile258 to Ile278 form a helical membrane-spanning segment. Residues Asn279–Asn285 lie on the Extracellular side of the membrane. The helical transmembrane segment at Phe286 to Ile306 threads the bilayer. Topologically, residues Arg307–His342 are cytoplasmic.

It belongs to the nematode receptor-like protein str family. As to quaternary structure, interacts with odr-4.

It localises to the cell projection. It is found in the cilium membrane. In terms of biological role, an odorant receptor which affects chemotaxis to the volatile odorant diacetyl. Specifies AWA neuronal cell fate via the odr-7 pathway. This chain is Serpentine receptor class r-10, found in Caenorhabditis briggsae.